We begin with the raw amino-acid sequence, 212 residues long: Pyridoxine/pyridoxamine 5'-phosphate oxidase (212 aa).

Substrate-binding positions include 8–11 (RRNY) and lysine 66. Residues 61-66 (RIVLLK), 76-77 (FT), arginine 82, lysine 83, and glutamine 105 contribute to the FMN site. Positions 123, 127, and 131 each coordinate substrate. Residues 140 to 141 (QS) and tryptophan 184 each bind FMN. 190–192 (RLH) lines the substrate pocket. Arginine 194 serves as a coordination point for FMN.

This sequence belongs to the pyridoxamine 5'-phosphate oxidase family. Homodimer. Requires FMN as cofactor.

The catalysed reaction is pyridoxamine 5'-phosphate + O2 + H2O = pyridoxal 5'-phosphate + H2O2 + NH4(+). It carries out the reaction pyridoxine 5'-phosphate + O2 = pyridoxal 5'-phosphate + H2O2. It functions in the pathway cofactor metabolism; pyridoxal 5'-phosphate salvage; pyridoxal 5'-phosphate from pyridoxamine 5'-phosphate: step 1/1. The protein operates within cofactor metabolism; pyridoxal 5'-phosphate salvage; pyridoxal 5'-phosphate from pyridoxine 5'-phosphate: step 1/1. In terms of biological role, catalyzes the oxidation of either pyridoxine 5'-phosphate (PNP) or pyridoxamine 5'-phosphate (PMP) into pyridoxal 5'-phosphate (PLP). The chain is Pyridoxine/pyridoxamine 5'-phosphate oxidase from Cupriavidus metallidurans (strain ATCC 43123 / DSM 2839 / NBRC 102507 / CH34) (Ralstonia metallidurans).